Consider the following 408-residue polypeptide: Peptidase T (408 aa).

Residue His-78 participates in Zn(2+) binding. Asp-80 is an active-site residue. Asp-140 lines the Zn(2+) pocket. Glu-173 functions as the Proton acceptor in the catalytic mechanism. Residues Glu-174, Asp-196, and His-379 each coordinate Zn(2+).

The protein belongs to the peptidase M20B family. Zn(2+) is required as a cofactor.

It is found in the cytoplasm. It carries out the reaction Release of the N-terminal residue from a tripeptide.. Cleaves the N-terminal amino acid of tripeptides. The polypeptide is Peptidase T (Shigella boydii serotype 18 (strain CDC 3083-94 / BS512)).